Consider the following 1708-residue polypeptide: 187-kDa microtubule-associated protein AIR9 (1708 aa).

A compositionally biased stretch (polar residues) spans S67–G93. The tract at residues S67 to S255 is disordered. A compositionally biased stretch (basic and acidic residues) spans D110 to K121. Over residues S122–K134 the composition is skewed to low complexity. Polar residues predominate over residues G149 to E165. The span at S173–P234 shows a compositional bias: low complexity. LRR repeat units follow at residues A267 to L290, S291 to R315, V316 to E335, C337 to L359, P360 to R382, Q384 to L402, and P403 to S425. 11 A9 repeats span residues P489 to S584, L601 to Y682, I698 to S777, I793 to L878, I895 to M977, V994 to E1073, F1090 to R1167, I1183 to I1272, V1287 to E1365, F1382 to E1473, and I1489 to S1569.

Interacts with KCBP. Strongly expressed in dividing cells, like the meristemic region of the root tip.

Its subcellular location is the cytoplasm. The protein resides in the cell cortex. The protein localises to the cytoskeleton. It localises to the phragmoplast. Its function is as follows. Microtubule-associated protein that may be involved in the maturation of cell plates and proper insertion of cross-walls after cytokinesis. This Arabidopsis thaliana (Mouse-ear cress) protein is 187-kDa microtubule-associated protein AIR9.